A 99-amino-acid chain; its full sequence is NADH-quinone oxidoreductase subunit K (99 aa).

A run of 3 helical transmembrane segments spans residues 3 to 23 (PMYY…GVLL), 28 to 48 (IIVF…LVTF), and 62 to 82 (FFVM…IVAI).

This sequence belongs to the complex I subunit 4L family. In terms of assembly, NDH-1 is composed of 14 different subunits. Subunits NuoA, H, J, K, L, M, N constitute the membrane sector of the complex.

Its subcellular location is the cell membrane. The catalysed reaction is a quinone + NADH + 5 H(+)(in) = a quinol + NAD(+) + 4 H(+)(out). In terms of biological role, NDH-1 shuttles electrons from NADH, via FMN and iron-sulfur (Fe-S) centers, to quinones in the respiratory chain. The immediate electron acceptor for the enzyme in this species is believed to be a menaquinone. Couples the redox reaction to proton translocation (for every two electrons transferred, four hydrogen ions are translocated across the cytoplasmic membrane), and thus conserves the redox energy in a proton gradient. This is NADH-quinone oxidoreductase subunit K from Acidothermus cellulolyticus (strain ATCC 43068 / DSM 8971 / 11B).